Here is a 137-residue protein sequence, read N- to C-terminus: Glutaredoxin-C9 (137 aa).

Residues 32–136 (GERVRMVVEE…PILKEVGALW (105 aa)) form the Glutaredoxin domain. Residues Cys-52 and Cys-55 are joined by a disulfide bond. Positions 134 to 137 (ALWL) match the Responsive for interaction with TGA factors motif.

Belongs to the glutaredoxin family. CC-type subfamily. Interacts with TGA2 and TGA6.

The protein resides in the cytoplasm. It localises to the nucleus. Its function is as follows. Has a glutathione-disulfide oxidoreductase activity in the presence of NADPH and glutathione reductase. Reduces low molecular weight disulfides and proteins. The polypeptide is Glutaredoxin-C9 (GRXC9) (Arabidopsis thaliana (Mouse-ear cress)).